A 222-amino-acid polypeptide reads, in one-letter code: Deoxyribose-phosphate aldolase (222 aa).

Catalysis depends on Asp93, which acts as the Proton donor/acceptor. Lys156 functions as the Schiff-base intermediate with acetaldehyde in the catalytic mechanism. The active-site Proton donor/acceptor is the Lys186.

This sequence belongs to the DeoC/FbaB aldolase family. DeoC type 1 subfamily.

It localises to the cytoplasm. The catalysed reaction is 2-deoxy-D-ribose 5-phosphate = D-glyceraldehyde 3-phosphate + acetaldehyde. It functions in the pathway carbohydrate degradation; 2-deoxy-D-ribose 1-phosphate degradation; D-glyceraldehyde 3-phosphate and acetaldehyde from 2-deoxy-alpha-D-ribose 1-phosphate: step 2/2. Functionally, catalyzes a reversible aldol reaction between acetaldehyde and D-glyceraldehyde 3-phosphate to generate 2-deoxy-D-ribose 5-phosphate. The polypeptide is Deoxyribose-phosphate aldolase (Nocardia farcinica (strain IFM 10152)).